The primary structure comprises 356 residues: sn-glycerol-3-phosphate import ATP-binding protein UgpC (356 aa).

Residues 4-235 enclose the ABC transporter domain; sequence LKLQAVTKSW…PASLFVASFI (232 aa). 37–44 contacts ATP; sequence GPSGCGKS.

This sequence belongs to the ABC transporter superfamily. sn-glycerol-3-phosphate importer (TC 3.A.1.1.3) family. In terms of assembly, the complex is composed of two ATP-binding proteins (UgpC), two transmembrane proteins (UgpA and UgpE) and a solute-binding protein (UgpB).

It localises to the cell inner membrane. It carries out the reaction sn-glycerol 3-phosphate(out) + ATP + H2O = sn-glycerol 3-phosphate(in) + ADP + phosphate + H(+). Part of the ABC transporter complex UgpBAEC involved in sn-glycerol-3-phosphate (G3P) import. Responsible for energy coupling to the transport system. This Escherichia coli O157:H7 protein is sn-glycerol-3-phosphate import ATP-binding protein UgpC.